Here is a 260-residue protein sequence, read N- to C-terminus: Transcription factor MYB4 (260 aa).

HTH myb-type domains follow at residues 12–64 (AVEV…LNYL) and 65–119 (RPGI…SKRS). DNA-binding regions (H-T-H motif) lie at residues 40-64 (WRMLPAKAGLKRCGKSCRLRWLNYL) and 92-115 (WSIIAGRIPGRTDNEIKNHWNTHL).

The protein localises to the nucleus. Transcription activator involved in the spatiotemporal regulation of flavonoid biosynthesis specifically in the corms of Montbretia. Activates the promoters of enzymes involved in the biosynthesis of the flavonol myricetin and the flavonol-glycoside montbretin A (MbA). MbA is a potent inhibitor of human pancreatic alpha-amylase and is being developed as drug candidate to treat type-2 diabetes. The protein is Transcription factor MYB4 of Crocosmia x crocosmiiflora (Montbretia).